The sequence spans 367 residues: Protein pxr1 (367 aa).

2 disordered regions span residues 1 to 28 (MGLS…TDSF) and 156 to 336 (KALK…PMGI). Over residues 15–27 (DPNNTKWSGNTDS) the composition is skewed to polar residues. In terms of domain architecture, G-patch spans 25 to 79 (TDSFGHRMMKSQGWTPGEYLGAKDAAHAEFHTAANASHIRVVIKDNNLGLGAKIG). Acidic residues predominate over residues 167–182 (SSDDSDSSSDEEEEEK). 3 stretches are compositionally biased toward basic residues: residues 209 to 221 (SKKS…SKKR), 236 to 248 (KSKK…KSKS), and 265 to 277 (KARK…KKRR). A compositionally biased stretch (low complexity) spans 282–296 (ATAGADTEETSSTSK). Residues 297-309 (SSKKNSKKDKHKS) show a composition bias toward basic residues. Residues 310-328 (SSASESSTKESTPTVTESS) show a composition bias toward low complexity.

This sequence belongs to the PINX1 family.

The protein localises to the nucleus. The protein resides in the nucleolus. Functionally, involved in rRNA-processing at A0, A1 and A2 sites and negatively regulates telomerase. This Sclerotinia sclerotiorum (strain ATCC 18683 / 1980 / Ss-1) (White mold) protein is Protein pxr1 (pxr1).